The primary structure comprises 337 residues: Nucleoid-associated protein PBPRA2585 (337 aa).

This sequence belongs to the YejK family.

It is found in the cytoplasm. The protein localises to the nucleoid. The protein is Nucleoid-associated protein PBPRA2585 of Photobacterium profundum (strain SS9).